A 1482-amino-acid polypeptide reads, in one-letter code: Chromosome partition protein MukB (1482 aa).

34–41 contacts ATP; that stretch reads GGNGAGKS. 6 coiled-coil regions span residues 337-468, 509-604, 780-805, 835-1044, 1070-1115, and 1210-1265; these read LNLV…LSVA, QHLA…APIW, RAARENRLEILHAEREKLAERYATLS, EAEI…ELVD, TNRA…TAKA, and EAIE…LQAV. The tract at residues 666 to 783 is flexible hinge; the sequence is PGGAEDQRLV…AVPLFGRAAR (118 aa).

The protein belongs to the SMC family. MukB subfamily. As to quaternary structure, homodimerization via its hinge domain. Binds to DNA via its C-terminal region. Interacts, and probably forms a ternary complex, with MukE and MukF via its C-terminal region. The complex formation is stimulated by calcium or magnesium. Interacts with tubulin-related protein FtsZ.

Its subcellular location is the cytoplasm. The protein localises to the nucleoid. In terms of biological role, plays a central role in chromosome condensation, segregation and cell cycle progression. Functions as a homodimer, which is essential for chromosome partition. Involved in negative DNA supercoiling in vivo, and by this means organize and compact chromosomes. May achieve or facilitate chromosome segregation by condensation DNA from both sides of a centrally located replisome during cell division. This is Chromosome partition protein MukB from Serratia proteamaculans (strain 568).